The sequence spans 255 residues: MPEATNIQVVIASGLDNEENNDHLVQSSDPQHPANLIPEMCRKFYTWGWVTGTGGGTSIRHGDHIFIAPSGVQKELIQPENIFVMQFPTPKYPPSERKYIRKPKNLKPSDCTPLFLTAFERGAMCCIHTHSQWAVLVTLLVERIYGKEAHFEISNIEQIKGIPKGKGKGMHNYHDTLRIPIIDNTPFEEDLTEGLERAIAANPDTYAVLVRRHGIYVWGDTPAKAKTQCESLDWLFQLAVEMHKLGLPWDINKTK.

Residue Cys111 coordinates substrate. Zn(2+) contacts are provided by His128 and His130. The Proton donor/acceptor role is filled by Glu157. A Zn(2+)-binding site is contributed by His213.

The protein belongs to the aldolase class II family. MtnB subfamily. Requires Zn(2+) as cofactor.

The protein resides in the cytoplasm. It catalyses the reaction 5-(methylsulfanyl)-D-ribulose 1-phosphate = 5-methylsulfanyl-2,3-dioxopentyl phosphate + H2O. It functions in the pathway amino-acid biosynthesis; L-methionine biosynthesis via salvage pathway; L-methionine from S-methyl-5-thio-alpha-D-ribose 1-phosphate: step 2/6. In terms of biological role, catalyzes the dehydration of methylthioribulose-1-phosphate (MTRu-1-P) into 2,3-diketo-5-methylthiopentyl-1-phosphate (DK-MTP-1-P). The chain is Methylthioribulose-1-phosphate dehydratase from Talaromyces stipitatus (strain ATCC 10500 / CBS 375.48 / QM 6759 / NRRL 1006) (Penicillium stipitatum).